Here is a 421-residue protein sequence, read N- to C-terminus: MFDTLTHGELLKKTAMEVEADIAGIHKQIEEISERNEWRVLQSYRKHKVSDTHFTPSTGYGYDDIGRDTLESIYADVFGGEAGLVRPQIISGTHAISIALFGVLRPGDELLYITGKPYDTLEEIVGVRGGENAGSLKDFQIGYNAVDLTKDGKIDYDAVAAAINPKTKVIGIQRSKGYANRPSFLISEIKEMIRFVKEINENLIVFVDNCYGEFVEELEPCHVGADLMAGSLIKNPGGGLAKTGGYLVGKAKWIEACSYRMTSPGIGREAGASLYSLQEMYQGFFLAPHVVSQSLKGAVFTARFLEKLGFTSNPKWDAKRTDLIQSVEFSDREKMIAFCQAIQFASPINAHVTPYPAYMPGYEDDVIMAAGTFIQGASIELSADGPIRPPYVAYVQGGLTYSHVKNAICSAVDSLMQKQLI.

This is an uncharacterized protein from Bacillus subtilis (strain 168).